We begin with the raw amino-acid sequence, 363 residues long: Ataxin-3 (363 aa).

The region spanning 1–180 is the Josephin domain; sequence MESIFHERQE…DCEADQLLQM (180 aa). The active-site Nucleophile is the Cys14. Catalysis depends on His119, which acts as the Proton acceptor. Asn134 is an active-site residue. The segment covering 192-209 has biased composition (basic and acidic residues); sequence IGEETAQSRDQRLPRSDV. Positions 192–212 are disordered; that stretch reads IGEETAQSRDQRLPRSDVDQA. UIM domains follow at residues 227–246, 247–266, and 337–356; these read EDEE…IDME, DEEA…SRQS, and SEED…ARNH. A compositionally biased stretch (polar residues) spans 260–290; it reads MQGSRQSEFSNSLPQNASQPPHTSQTDSLSS. Residues 260–363 form a disordered region; that stretch reads MQGSRQSEFS…RNHLSTEEKK (104 aa). The span at 353-363 shows a compositional bias: basic and acidic residues; sequence ARNHLSTEEKK.

In terms of tissue distribution, widely expressed.

It localises to the nucleus matrix. Its subcellular location is the nucleus. The protein resides in the lysosome membrane. It carries out the reaction Thiol-dependent hydrolysis of ester, thioester, amide, peptide and isopeptide bonds formed by the C-terminal Gly of ubiquitin (a 76-residue protein attached to proteins as an intracellular targeting signal).. In terms of biological role, deubiquitinating enzyme involved in protein homeostasis maintenance, transcription, cytoskeleton regulation, myogenesis and degradation of misfolded chaperone substrates. Binds long polyubiquitin chains and trims them, while it has weak or no activity against chains of 4 or less ubiquitins. Involved in degradation of misfolded chaperone substrates via its interaction with STUB1/CHIP: recruited to monoubiquitinated STUB1/CHIP, and restricts the length of ubiquitin chain attached to STUB1/CHIP substrates and preventing further chain extension. Interacts with key regulators of transcription and represses transcription: acts as a histone-binding protein that regulates transcription. Acts as a negative regulator of mTORC1 signaling in response to amino acid deprivation by mediating deubiquitination of RHEB, thereby promoting RHEB inactivation by the TSC-TBC complex. Regulates autophagy via the deubiquitination of 'Lys-402' of BECN1 leading to the stabilization of BECN1. The chain is Ataxin-3 (ATXN3) from Gallus gallus (Chicken).